The chain runs to 251 residues: MILYEYPFNERIRTLLRLEDLFERFAFFLAQEDPREHHVALTTLFEIAEVTGRADLKSDLMKELERQRQTLAPFRGNPGIEQNALEAVLGEIEQTLANLAQMQGKTGQHLVDNEWLASIRSRAVIPGGTCKFDLPSYYAWQQWPAEQRRQDIAKWILPMLPLRDAAAIVLRLARESGQASKVMAMQGSYQQMLSGRSYQLMQVRVPPELRVIPEASANKYMLWVRFTMQDGDVRPRAVDIDVPFHLTLCNL.

Belongs to the ZapD family. Interacts with FtsZ.

It localises to the cytoplasm. In terms of biological role, cell division factor that enhances FtsZ-ring assembly. Directly interacts with FtsZ and promotes bundling of FtsZ protofilaments, with a reduction in FtsZ GTPase activity. This Burkholderia orbicola (strain MC0-3) protein is Cell division protein ZapD.